Here is a 132-residue protein sequence, read N- to C-terminus: Large-conductance mechanosensitive channel (132 aa).

2 helical membrane-spanning segments follow: residues F10–G30 and G76–I96.

This sequence belongs to the MscL family. In terms of assembly, homopentamer.

Its subcellular location is the cell inner membrane. In terms of biological role, channel that opens in response to stretch forces in the membrane lipid bilayer. May participate in the regulation of osmotic pressure changes within the cell. This chain is Large-conductance mechanosensitive channel, found in Campylobacter hominis (strain ATCC BAA-381 / DSM 21671 / CCUG 45161 / LMG 19568 / NCTC 13146 / CH001A).